Here is a 246-residue protein sequence, read N- to C-terminus: Cell division protein ZapD (246 aa).

It belongs to the ZapD family. Interacts with FtsZ.

It is found in the cytoplasm. Cell division factor that enhances FtsZ-ring assembly. Directly interacts with FtsZ and promotes bundling of FtsZ protofilaments, with a reduction in FtsZ GTPase activity. This chain is Cell division protein ZapD, found in Vibrio atlanticus (strain LGP32) (Vibrio splendidus (strain Mel32)).